A 178-amino-acid polypeptide reads, in one-letter code: ATP-dependent protease subunit HslV (178 aa).

Threonine 7 is a catalytic residue. Na(+) contacts are provided by glycine 162, cysteine 165, and threonine 168.

This sequence belongs to the peptidase T1B family. HslV subfamily. A double ring-shaped homohexamer of HslV is capped on each side by a ring-shaped HslU homohexamer. The assembly of the HslU/HslV complex is dependent on binding of ATP.

The protein localises to the cytoplasm. The catalysed reaction is ATP-dependent cleavage of peptide bonds with broad specificity.. Its activity is regulated as follows. Allosterically activated by HslU binding. In terms of biological role, protease subunit of a proteasome-like degradation complex believed to be a general protein degrading machinery. The chain is ATP-dependent protease subunit HslV from Janthinobacterium sp. (strain Marseille) (Minibacterium massiliensis).